Here is a 156-residue protein sequence, read N- to C-terminus: 13 kDa prolamin C (156 aa).

Positions 1-19 (MKIIFVFALLAIVACNASA) are cleaved as a signal peptide. The tract at residues 77–84 (QQQCCQQL) is octapeptide unique to cereal prolamins.

The protein belongs to the prolamin family.

The protein resides in the vacuole. Its subcellular location is the aleurone grain. Its function is as follows. Seed storage protein; serves as a source of nitrogen, carbon and sulfur for the young developing seedling. This Oryza sativa subsp. japonica (Rice) protein is 13 kDa prolamin C (PROLM25).